A 407-amino-acid chain; its full sequence is Phosphopentomutase (407 aa).

Mn(2+) contacts are provided by aspartate 10, aspartate 306, histidine 311, aspartate 347, histidine 348, and histidine 359.

It belongs to the phosphopentomutase family. It depends on Mn(2+) as a cofactor.

It is found in the cytoplasm. It catalyses the reaction 2-deoxy-alpha-D-ribose 1-phosphate = 2-deoxy-D-ribose 5-phosphate. It carries out the reaction alpha-D-ribose 1-phosphate = D-ribose 5-phosphate. Its pathway is carbohydrate degradation; 2-deoxy-D-ribose 1-phosphate degradation; D-glyceraldehyde 3-phosphate and acetaldehyde from 2-deoxy-alpha-D-ribose 1-phosphate: step 1/2. Functionally, isomerase that catalyzes the conversion of deoxy-ribose 1-phosphate (dRib-1-P) and ribose 1-phosphate (Rib-1-P) to deoxy-ribose 5-phosphate (dRib-5-P) and ribose 5-phosphate (Rib-5-P), respectively. The polypeptide is Phosphopentomutase (Pectobacterium atrosepticum (strain SCRI 1043 / ATCC BAA-672) (Erwinia carotovora subsp. atroseptica)).